The chain runs to 86 residues: RNA-binding protein Hfq (86 aa).

The Sm domain maps to 12 to 73 (DIFLNQVRKE…ISTITPQKPV (62 aa)).

The protein belongs to the Hfq family. As to quaternary structure, homohexamer.

Its function is as follows. RNA chaperone that binds small regulatory RNA (sRNAs) and mRNAs to facilitate mRNA translational regulation in response to envelope stress, environmental stress and changes in metabolite concentrations. Also binds with high specificity to tRNAs. The chain is RNA-binding protein Hfq from Thermoanaerobacter pseudethanolicus (strain ATCC 33223 / 39E) (Clostridium thermohydrosulfuricum).